A 163-amino-acid polypeptide reads, in one-letter code: tRNA-acetylating toxin 2 (163 aa).

Residues Leu-89, Val-91, His-96, Gly-97, Gln-98, Gly-99, Ala-101, Arg-102, and Glu-132 each coordinate acetyl-CoA. Residue Tyr-137 is part of the active site. An acetyl-CoA-binding site is contributed by Arg-139.

This sequence belongs to the acetyltransferase family. GNAT subfamily. As to quaternary structure, homodimer (in absence of antitoxin). Forms a complex with cognate antitoxin TacA2. Forms a 4:2 antitoxin:toxin complex with cognate antitoxin TacA2.

It catalyses the reaction glycyl-tRNA(Gly) + acetyl-CoA = N-acetylglycyl-tRNA(Gly) + CoA + H(+). Its function is as follows. Toxic component of a type II toxin-antitoxin (TA) system. Acetylates tRNA and inhibits translation. Acetylates exclusively Gly in situ. Overexpression during the lag phase of a tacA2-tacT2 deletion strain leads to very small increase in persister cells in the presence of cefotaxime but no detectable growth phenotype in absence of antibiotics. Compared to a protein with a single amino acid change (TacT2 from S.enterica NCTC 13349, Glu-29 is Lys in NCTC 13349) this protein binds tRNA very poorly and acetylates tRNA very poorly. Persister cell formation is neutralized by cognate antitoxin TacA2. Neutralized only by cognate antitoxin TacA2 (A8), but not by TacA1 or TacA3. Plays a role in persister cell formation. Functionally, the TacA2-TacT2 complex both represses and derepresses expression of its own operon. In Salmonella typhimurium (strain 14028s / SGSC 2262), this protein is tRNA-acetylating toxin 2.